The chain runs to 119 residues: MPPHIFIAFCILECFVETLSGNSKLGILGRSNVNSSAINGGAWSALESGIDESVARGSSTGIFTIWKIFSLLKAIEINYVFPLVYLFCVVFQFLSLGCYLSIFFRKTKSEEAKKRTSLY.

Residues Val-80–Phe-104 form a helical membrane-spanning segment.

The protein localises to the membrane. This is an uncharacterized protein from Saccharomyces cerevisiae (strain ATCC 204508 / S288c) (Baker's yeast).